We begin with the raw amino-acid sequence, 232 residues long: Octanoyltransferase (232 aa).

The BPL/LPL catalytic domain maps to Asn-32 to Tyr-219. Substrate-binding positions include Arg-77–His-84, Ala-140–Gly-142, and Gly-153–Ala-155. Cys-171 (acyl-thioester intermediate) is an active-site residue.

Belongs to the LipB family.

Its subcellular location is the cytoplasm. The enzyme catalyses octanoyl-[ACP] + L-lysyl-[protein] = N(6)-octanoyl-L-lysyl-[protein] + holo-[ACP] + H(+). It functions in the pathway protein modification; protein lipoylation via endogenous pathway; protein N(6)-(lipoyl)lysine from octanoyl-[acyl-carrier-protein]: step 1/2. In terms of biological role, catalyzes the transfer of endogenously produced octanoic acid from octanoyl-acyl-carrier-protein onto the lipoyl domains of lipoate-dependent enzymes. Lipoyl-ACP can also act as a substrate although octanoyl-ACP is likely to be the physiological substrate. In Dictyoglomus turgidum (strain DSM 6724 / Z-1310), this protein is Octanoyltransferase.